The chain runs to 283 residues: 4-diphosphocytidyl-2-C-methyl-D-erythritol kinase (283 aa).

The active site involves lysine 10. An ATP-binding site is contributed by 99-109 (PMGGGLGGGSS). Aspartate 141 is a catalytic residue.

The protein belongs to the GHMP kinase family. IspE subfamily. In terms of assembly, homodimer.

It catalyses the reaction 4-CDP-2-C-methyl-D-erythritol + ATP = 4-CDP-2-C-methyl-D-erythritol 2-phosphate + ADP + H(+). It participates in isoprenoid biosynthesis; isopentenyl diphosphate biosynthesis via DXP pathway; isopentenyl diphosphate from 1-deoxy-D-xylulose 5-phosphate: step 3/6. Its function is as follows. Catalyzes the phosphorylation of the position 2 hydroxy group of 4-diphosphocytidyl-2C-methyl-D-erythritol. This Citrobacter koseri (strain ATCC BAA-895 / CDC 4225-83 / SGSC4696) protein is 4-diphosphocytidyl-2-C-methyl-D-erythritol kinase.